A 302-amino-acid polypeptide reads, in one-letter code: uncharacterized protein (302 aa).

The 77-residue stretch at 13 to 89 (QTLFKFLKKT…VNLDIVYEDN (77 aa)) folds into the S4 RNA-binding domain. Residue aspartate 141 is part of the active site.

It belongs to the pseudouridine synthase RluA family.

The catalysed reaction is a uridine in RNA = a pseudouridine in RNA. This is an uncharacterized protein from Mycoplasma capricolum subsp. capricolum (strain California kid / ATCC 27343 / NCTC 10154).